A 706-amino-acid polypeptide reads, in one-letter code: Glutamine-dependent NAD(+) synthetase (706 aa).

One can recognise a CN hydrolase domain in the interval 5-275; it reads VTVATCALNQ…VEVLTATLDL (271 aa). E45 acts as the Proton acceptor; for glutaminase activity in catalysis. The For glutaminase activity role is filled by K114. The active-site Nucleophile; for glutaminase activity is C175. The tract at residues 325–706 is ligase; the sequence is YHSPEEEISL…AEPQSLDGVD (382 aa). ATP is bound at residue 355–362; that stretch reads PLSGGVDS. S357 is a catalytic residue.

It in the C-terminal section; belongs to the NAD synthetase family. Homohexamer.

The catalysed reaction is deamido-NAD(+) + L-glutamine + ATP + H2O = L-glutamate + AMP + diphosphate + NAD(+) + H(+). Its pathway is cofactor biosynthesis; NAD(+) biosynthesis; NAD(+) from deamido-NAD(+) (L-Gln route): step 1/1. Functionally, catalyzes the final step of the nicotinamide adenine dinucleotide (NAD) de novo synthesis pathway, the ATP-dependent amidation of deamido-NAD using L-glutamine as a nitrogen source. The sequence is that of Glutamine-dependent NAD(+) synthetase (NADSYN1) from Homo sapiens (Human).